A 451-amino-acid polypeptide reads, in one-letter code: Sex peptide receptor-related protein 2 (451 aa).

At 1–63 (MNYEVYCGNA…DNLEIVVYGQ (63 aa)) the chain is on the extracellular side. Asn-15 is a glycosylation site (N-linked (GlcNAc...) asparagine). A helical membrane pass occupies residues 64 to 84 (IFPILVLFAVFANAAVALVLS). The Cytoplasmic segment spans residues 85-97 (KKHMITPTNVVLK). A helical transmembrane segment spans residues 98-118 (YMAIAELLVGLVPLPWTLFFF). The Extracellular segment spans residues 119–140 (SMGNIKETHRLELWWCYLQKYS). Cysteines 134 and 225 form a disulfide. The chain crosses the membrane as a helical span at residues 141 to 161 (MDAFPPVFHMIAMWLTVLLAA). Topologically, residues 162-183 (QRYVSISHPLHSRSACNVKNVR) are cytoplasmic. Residues 184-204 (LATMIITVTSFLCGLPKSFDY) form a helical membrane-spanning segment. Over 205 to 251 (EYETVHGWIYSHGNWTYASSCVMMPTAILTNMGQTVYFNIYFWTRAL) the chain is Extracellular. A glycan (N-linked (GlcNAc...) asparagine) is linked at Asn-218. The chain crosses the membrane as a helical span at residues 252-272 (GFIILPSFLLVLLNGLLIKGI). The Cytoplasmic portion of the chain corresponds to 273–301 (RRAQRRKLRLLREKRSEEAARQRDSNSTS). Residues 302–322 (LMLVAIVSIFLIVNLPQAIFM) traverse the membrane as a helical segment. At 323 to 334 (GLLCVCETFTIK) the chain is on the extracellular side. Residues 335–355 (IPILEGTFPAVFLIASNMIVI) traverse the membrane as a helical segment. At 356-451 (ATYPINFGIY…TQFTTMDRSD (96 aa)) the chain is on the cytoplasmic side.

Belongs to the G-protein coupled receptor 1 family. Expressed in head neurons including the ASE sensory neurons and the ASI and AWB chemosensory neurons, the midbody neurons SDQ, and motor neurons in the tail.

The protein localises to the cell membrane. Functionally, G-protein coupled receptor for the neuropeptide like protein nlp-38. Plays a role in several types of aversive gustatory associative learning including gustatory plasticity and salt avoidance learning. Its role in salt avoidance learning may be through activation of the transcription factor crh-1/CREB and de novo transcription and translation, which in turn promotes the formation of long-term memory. The sequence is that of Sex peptide receptor-related protein 2 from Caenorhabditis elegans.